The primary structure comprises 416 residues: Gamma-glutamyl phosphate reductase (416 aa).

It belongs to the gamma-glutamyl phosphate reductase family.

The protein resides in the cytoplasm. The catalysed reaction is L-glutamate 5-semialdehyde + phosphate + NADP(+) = L-glutamyl 5-phosphate + NADPH + H(+). The protein operates within amino-acid biosynthesis; L-proline biosynthesis; L-glutamate 5-semialdehyde from L-glutamate: step 2/2. Its function is as follows. Catalyzes the NADPH-dependent reduction of L-glutamate 5-phosphate into L-glutamate 5-semialdehyde and phosphate. The product spontaneously undergoes cyclization to form 1-pyrroline-5-carboxylate. The protein is Gamma-glutamyl phosphate reductase of Streptococcus pyogenes serotype M4 (strain MGAS10750).